The chain runs to 238 residues: 3-dehydroquinate dehydratase (238 aa).

3-dehydroquinate is bound by residues glutamate 35–arginine 37 and arginine 70. The Proton donor/acceptor role is filled by histidine 133. The active-site Schiff-base intermediate with substrate is lysine 160. 2 residues coordinate 3-dehydroquinate: arginine 202 and glutamine 225.

This sequence belongs to the type-I 3-dehydroquinase family. Homodimer.

The enzyme catalyses 3-dehydroquinate = 3-dehydroshikimate + H2O. Its pathway is metabolic intermediate biosynthesis; chorismate biosynthesis; chorismate from D-erythrose 4-phosphate and phosphoenolpyruvate: step 3/7. Functionally, involved in the third step of the chorismate pathway, which leads to the biosynthesis of aromatic amino acids. Catalyzes the cis-dehydration of 3-dehydroquinate (DHQ) and introduces the first double bond of the aromatic ring to yield 3-dehydroshikimate. This Staphylococcus aureus (strain bovine RF122 / ET3-1) protein is 3-dehydroquinate dehydratase.